The following is a 607-amino-acid chain: MTLFILTETSAGYALLKAKDKKLLKRDDLEKETQTAEGVSNLLKLKNFQKFDSATTALEEVASLVEGKVTPRLASLLESIKDEKKVSLAVADPKLGNAIGKLPGLSIQAIADSTTADLYRAIRAHLPTLIPGLLPTDMSTMALGLSHSLARHKLKFSPDKIDTMIVQAIALLDDLDKELNTYAMRVKEWYGWHFPEMAKILNDNMAYAKVVLKMGMRSNSDSADLSEILPEEIEGAVKAAANRSMGTDISNEDLENIQCLAEQVVGFAEYRQQLASYLTARMTAIAPNLTALVGELVGARLIAHAGSLVNLSKSPASTIQILGAEKALFRALKTKHDTPKYGLIYHASLIGQATGKNKGKMARVLAAKAAIGLRVDALAEWEKDADGNEPTEEERAALGMESRYYLEKKLAAMEGKPLKPRGVGIAPNGIPIEQPKKWDIKEARKHNPDADGLTGDEPAATENVSKKSKKDKKLVEEIKDEEMKDAPESEEEEEASEAEESEEEKPKKSKKKESKTSKGKDSDEAKIEELAEKAGLSVKRYLRKLERGEINFDEDGNPTAISKKELKKAKKEAKKAEKDAGKKRKRDEDEEPAESKSEKKKKKKSKA.

A Nop domain is found at 285–415 (IAPNLTALVG…LEKKLAAMEG (131 aa)). Disordered regions lie at residues 419 to 438 (KPRGVGIAPNGIPIEQPKKW) and 446 to 607 (HNPD…KSKA). A compositionally biased stretch (basic and acidic residues) spans 473-487 (KLVEEIKDEEMKDAP). Over residues 488 to 503 (ESEEEEEASEAEESEE) the composition is skewed to acidic residues. A compositionally biased stretch (basic and acidic residues) spans 514 to 532 (SKTSKGKDSDEAKIEELAE). The segment covering 598 to 607 (EKKKKKKSKA) has biased composition (basic residues).

Belongs to the NOP5/NOP56 family.

The protein resides in the nucleus. It is found in the nucleolus. Required for pre-18S rRNA processing. May bind microtubules. In Coccidioides immitis (strain RS) (Valley fever fungus), this protein is Nucleolar protein 58 (NOP58).